A 192-amino-acid polypeptide reads, in one-letter code: Flavin prenyltransferase UbiX (192 aa).

FMN contacts are provided by residues 10 to 12 (GAS), S36, 92 to 95 (SVAT), and R127. Dimethylallyl phosphate-binding residues include Y157 and K173.

The protein belongs to the UbiX/PAD1 family.

The enzyme catalyses dimethylallyl phosphate + FMNH2 = prenylated FMNH2 + phosphate. In terms of biological role, flavin prenyltransferase that catalyzes the synthesis of the prenylated FMN cofactor (prenyl-FMN) for 4-hydroxy-3-polyprenylbenzoic acid decarboxylase UbiD. The prenyltransferase is metal-independent and links a dimethylallyl moiety from dimethylallyl monophosphate (DMAP) to the flavin N5 and C6 atoms of FMN. In Chlamydia trachomatis serovar D (strain ATCC VR-885 / DSM 19411 / UW-3/Cx), this protein is Flavin prenyltransferase UbiX.